The following is a 380-amino-acid chain: Deoxyguanosinetriphosphate triphosphohydrolase-like protein (380 aa).

Residues 1 to 28 (MYAPYATMPDRSRGRAVPEEESSFRSPF) form a disordered region. In terms of domain architecture, HD spans 62–198 (RLTHSIEVGQ…AALADDIAYN (137 aa)).

The protein belongs to the dGTPase family. Type 2 subfamily.

The sequence is that of Deoxyguanosinetriphosphate triphosphohydrolase-like protein from Ruegeria sp. (strain TM1040) (Silicibacter sp.).